Reading from the N-terminus, the 498-residue chain is Polygalacturonan/rhamnogalacturonan-binding protein YtcQ (498 aa).

An N-terminal signal peptide occupies residues 1–22 (MGNKWRVLLIVLVLALGGVLAG). Cys23 carries the N-palmitoyl cysteine lipid modification. Residue Cys23 is the site of S-diacylglycerol cysteine attachment.

It belongs to the bacterial solute-binding protein 1 family. The complex is probably composed of two ATP-binding proteins (MsmX), two transmembrane proteins (YtcP and YteP) and a solute-binding protein (YtcQ).

It localises to the cell membrane. Involved in pectin degradation. Part of the ABC transporter complex YtcQP-YteP involved in the uptake of polygalacturonan and rhamnogalacturonan type I. In Bacillus subtilis (strain 168), this protein is Polygalacturonan/rhamnogalacturonan-binding protein YtcQ (ytcQ).